Consider the following 326-residue polypeptide: ATP synthase gamma chain (326 aa).

Belongs to the ATPase gamma chain family. In terms of assembly, F-type ATPases have 2 components, CF(1) - the catalytic core - and CF(0) - the membrane proton channel. CF(1) has five subunits: alpha(3), beta(3), gamma(1), delta(1), epsilon(1). CF(0) has three main subunits: a, b and c.

It localises to the cell membrane. Produces ATP from ADP in the presence of a proton gradient across the membrane. The gamma chain is believed to be important in regulating ATPase activity and the flow of protons through the CF(0) complex. The protein is ATP synthase gamma chain of Rhodococcus opacus (strain B4).